The primary structure comprises 296 residues: MAGLSLQHPWAFAFGLLGNLISFTTYLAPIPTFYRIYKSKSTEGFQSVPYVVALFSAMLWIFYALIKSNEALLITINAAGCVIETIYIVMYLAYAPKKAKVFTTKILLLLNVGVFGVILLLTLLLSHGEQRVVSLGWVCVAFSVSVFVAPLSIIKRVIQSRSVEYMPFSLSLTLTLSAVVWFLYGLLIKDKYVALPNILGFTFGVVQMGLYVFYMNATPVAGEGKEGKGKLAAAEELPVVVNVGKLAAATPDRSTGAVHVHPVPRSCAAEAAAAEPEVLVDIPPPPPPRAVEVAAV.

Over 1–9 the chain is Extracellular; the sequence is MAGLSLQHP. A helical membrane pass occupies residues 10–30; it reads WAFAFGLLGNLISFTTYLAPI. Residues 13-98 form the MtN3/slv 1 domain; it reads AFGLLGNLIS…VMYLAYAPKK (86 aa). The Cytoplasmic portion of the chain corresponds to 31 to 45; it reads PTFYRIYKSKSTEGF. Residues 46–66 form a helical membrane-spanning segment; it reads QSVPYVVALFSAMLWIFYALI. The Extracellular segment spans residues 67-71; the sequence is KSNEA. A helical membrane pass occupies residues 72–92; it reads LLITINAAGCVIETIYIVMYL. Over 93–105 the chain is Cytoplasmic; sequence AYAPKKAKVFTTK. A helical membrane pass occupies residues 106–126; it reads ILLLLNVGVFGVILLLTLLLS. Residues 127 to 133 lie on the Extracellular side of the membrane; that stretch reads HGEQRVV. Residues 134 to 154 traverse the membrane as a helical segment; that stretch reads SLGWVCVAFSVSVFVAPLSII. The MtN3/slv 2 domain occupies 134-217; that stretch reads SLGWVCVAFS…MGLYVFYMNA (84 aa). Over 155–167 the chain is Cytoplasmic; sequence KRVIQSRSVEYMP. A helical transmembrane segment spans residues 168–188; the sequence is FSLSLTLTLSAVVWFLYGLLI. Topologically, residues 189-192 are extracellular; sequence KDKY. Residues 193-213 traverse the membrane as a helical segment; the sequence is VALPNILGFTFGVVQMGLYVF. The Cytoplasmic portion of the chain corresponds to 214–296; the sequence is YMNATPVAGE…PPRAVEVAAV (83 aa).

This sequence belongs to the SWEET sugar transporter family. As to quaternary structure, forms homooligomers and/or heterooligomers.

The protein resides in the cell membrane. In terms of biological role, mediates both low-affinity uptake and efflux of sugar across the plasma membrane. Confers blight susceptibility. Confers TAL effector-mediated susceptibility to Xanthomonas oryzae pv. oryzae. This Oryza sativa subsp. japonica (Rice) protein is Bidirectional sugar transporter SWEET13 (SWEET13).